The sequence spans 1122 residues: Angiopoietin-1 receptor (1122 aa).

The signal sequence occupies residues 1–22 (MDSLAGLVLCGVSLLLYGVVEG). The Extracellular portion of the chain corresponds to 23–746 (AMDLILINSL…SADLGGGKML (724 aa)). C44 and C102 are oxidised to a cystine. The 80-residue stretch at 44 to 123 (CIASGWHPHE…RTMKMRQQAS (80 aa)) folds into the Ig-like C2-type 1 domain. N140 and N158 each carry an N-linked (GlcNAc...) asparagine glycan. 3 EGF-like domains span residues 210-252 (RCEA…RTCE), 254-299 (ACEP…LQCN), and 301-341 (ACPS…LQCE). Cystine bridges form between C211/C220, C224/C233, C227/C240, C242/C251, C255/C264, C268/C274, C280/C287, C289/C298, C302/C311, C315/C323, C317/C329, C331/C340, and C370/C424. The Ig-like C2-type 2 domain maps to 350–440 (PQIEDLPDHI…GMVEKPFNIS (91 aa)). 7 N-linked (GlcNAc...) asparagine glycosylation sites follow: N399, N438, N464, N558, N595, N648, and N690. 3 Fibronectin type-III domains span residues 444–539 (LPEP…TASI), 543–635 (PPRG…TLSD), and 640–733 (QPEN…TLPH). The chain crosses the membrane as a helical span at residues 747–767 (LIAILGSAGMTCITVLLAFLI). The Cytoplasmic portion of the chain corresponds to 768 to 1122 (MLQLKRANVQ…GIDCSAEEAA (355 aa)). Positions 822-1094 (IKFQDVIGEG…QILVSLNRML (273 aa)) constitute a Protein kinase domain. Residues 828-836 (IGEGNFGQV) and K853 each bind ATP. A Phosphotyrosine; by autocatalysis modification is found at Y858. Residue D962 is the Proton acceptor of the active site. Y990, Y1100, and Y1106 each carry phosphotyrosine; by autocatalysis.

Belongs to the protein kinase superfamily. Tyr protein kinase family. Tie subfamily. Homodimer. Heterodimer with TIE1. Interacts with ANGPT1, ANGPT2 and ANGPT4. At cell-cell contacts in quiescent cells, forms a signaling complex composed of ANGPT1 plus TEK molecules from two adjoining cells. In the absence of endothelial cell-cell contacts, interaction with ANGPT1 mediates contacts with the extracellular matrix. Interacts (tyrosine phosphorylated) with TNIP2. Interacts (tyrosine phosphorylated) with SHC1 (via SH2 domain). Interacts with PTPRB; this promotes endothelial cell-cell adhesion. Interacts with DOK2, GRB2, GRB7, GRB14, PIK3R1 and PTPN11/SHP2. Colocalizes with DOK2 at contacts with the extracellular matrix in migrating cells. In terms of processing, proteolytic processing leads to the shedding of the extracellular domain (soluble TIE-2 alias sTIE-2). Post-translationally, autophosphorylated on tyrosine residues in response to ligand binding. Autophosphorylation occurs in trans, i.e. one subunit of the dimeric receptor phosphorylates tyrosine residues on the other subunit. Autophosphorylation occurs in a sequential manner, where Tyr-990 in the kinase activation loop is phosphorylated first, followed by autophosphorylation at Tyr-1106 and at additional tyrosine residues. ANGPT1-induced phosphorylation is impaired during hypoxia, due to increased expression of ANGPT2. Phosphorylation is important for interaction with GRB14, PIK3R1 and PTPN11. Phosphorylation at Tyr-1100 is important for interaction with GRB2 and GRB7. Phosphorylation at Tyr-1106 is important for interaction with DOK2 and for coupling to downstream signal transduction pathways in endothelial cells. Dephosphorylated by PTPRB. Ubiquitinated. The phosphorylated receptor is ubiquitinated and internalized, leading to its degradation. As to expression, specifically expressed in developing vascular endothelial cells. Abundantly expressed in lung and heart, moderately in brain, liver and kidney, and weakly in thymus, spleen and testis.

Its subcellular location is the cell membrane. It is found in the cell junction. It localises to the focal adhesion. The protein localises to the cytoplasm. The protein resides in the cytoskeleton. Its subcellular location is the secreted. It carries out the reaction L-tyrosyl-[protein] + ATP = O-phospho-L-tyrosyl-[protein] + ADP + H(+). With respect to regulation, angiopoietin binding leads to receptor dimerization and activation by autophosphorylation at Tyr-990 on the kinase activation loop. In terms of biological role, tyrosine-protein kinase that acts as a cell-surface receptor for ANGPT1, ANGPT2 and ANGPT4 and regulates angiogenesis, endothelial cell survival, proliferation, migration, adhesion and cell spreading, reorganization of the actin cytoskeleton, but also maintenance of vascular quiescence. Has anti-inflammatory effects by preventing the leakage of pro-inflammatory plasma proteins and leukocytes from blood vessels. Required for normal angiogenesis and heart development during embryogenesis. Required for postnatal hematopoiesis. After birth, activates or inhibits angiogenesis, depending on the context. Inhibits angiogenesis and promotes vascular stability in quiescent vessels, where endothelial cells have tight contacts. In quiescent vessels, ANGPT1 oligomers recruit TEK to cell-cell contacts, forming complexes with TEK molecules from adjoining cells, and this leads to preferential activation of phosphatidylinositol 3-kinase and the AKT1 signaling cascades. In migrating endothelial cells that lack cell-cell adhesions, ANGT1 recruits TEK to contacts with the extracellular matrix, leading to the formation of focal adhesion complexes, activation of PTK2/FAK and of the downstream kinases MAPK1/ERK2 and MAPK3/ERK1, and ultimately to the stimulation of sprouting angiogenesis. ANGPT1 signaling triggers receptor dimerization and autophosphorylation at specific tyrosine residues that then serve as binding sites for scaffold proteins and effectors. Signaling is modulated by ANGPT2 that has lower affinity for TEK, can promote TEK autophosphorylation in the absence of ANGPT1, but inhibits ANGPT1-mediated signaling by competing for the same binding site. Signaling is also modulated by formation of heterodimers with TIE1, and by proteolytic processing that gives rise to a soluble TEK extracellular domain. The soluble extracellular domain modulates signaling by functioning as decoy receptor for angiopoietins. TEK phosphorylates DOK2, GRB7, GRB14, PIK3R1, SHC1 and TIE1. The chain is Angiopoietin-1 receptor (Tek) from Mus musculus (Mouse).